Reading from the N-terminus, the 584-residue chain is DNA ligase (584 aa).

Position 249 (Glu-249) interacts with ATP. Residue Lys-251 is the N6-AMP-lysine intermediate of the active site. Residues Arg-256, Arg-271, Glu-301, Phe-341, Arg-416, and Lys-422 each coordinate ATP.

The protein belongs to the ATP-dependent DNA ligase family. The cofactor is Mg(2+).

It carries out the reaction ATP + (deoxyribonucleotide)n-3'-hydroxyl + 5'-phospho-(deoxyribonucleotide)m = (deoxyribonucleotide)n+m + AMP + diphosphate.. Functionally, DNA ligase that seals nicks in double-stranded DNA during DNA replication, DNA recombination and DNA repair. This is DNA ligase from Pyrobaculum neutrophilum (strain DSM 2338 / JCM 9278 / NBRC 100436 / V24Sta) (Thermoproteus neutrophilus).